Here is a 305-residue protein sequence, read N- to C-terminus: MQGNFSKKIDPMSNLPFTVAALYCFAPLPQYESLREPLAQLCCANGIKGTLLLAAEGINGTVAGSAGAIEKLIAHITAIPGLGEPELKYSHASEMPFHRMKVRLKREIVTMGVEGIDPLKSVGTYIAPKDWNALIADENTVVVDKRNDYEYAIGTFEGAIDPQTRTFREFPEWVKQNRDRLEGKKIAMFCTGGIRCEKATAFVKGLGFDDVYHLKGGILKYLEEVPREQSMWNGECFVFDERVAVGHGLAESDVELCRACRRPLTPQDKLSQFFEEGVSCAGCYAERQKQVKLAEKRGANKHIGS.

The Rhodanese domain maps to 136–230 (ADENTVVVDK…YLEEVPREQS (95 aa)). Cys-190 serves as the catalytic Cysteine persulfide intermediate.

Belongs to the TrhO family.

It catalyses the reaction uridine(34) in tRNA + AH2 + O2 = 5-hydroxyuridine(34) in tRNA + A + H2O. Functionally, catalyzes oxygen-dependent 5-hydroxyuridine (ho5U) modification at position 34 in tRNAs. The sequence is that of tRNA uridine(34) hydroxylase from Brucella melitensis biotype 1 (strain ATCC 23456 / CCUG 17765 / NCTC 10094 / 16M).